We begin with the raw amino-acid sequence, 332 residues long: Ribosomal RNA small subunit methyltransferase C (332 aa).

Belongs to the methyltransferase superfamily. RsmC family. Monomer.

The protein localises to the cytoplasm. The enzyme catalyses guanosine(1207) in 16S rRNA + S-adenosyl-L-methionine = N(2)-methylguanosine(1207) in 16S rRNA + S-adenosyl-L-homocysteine + H(+). Functionally, specifically methylates the guanine in position 1207 of 16S rRNA in the 30S particle. This chain is Ribosomal RNA small subunit methyltransferase C, found in Pseudomonas syringae pv. syringae (strain B728a).